A 69-amino-acid chain; its full sequence is MIYKVFYQEKADEVPVREKTDSLYIEGVSERDVRTKLKDQKYNIEFVQPVDGAFLEYEKQSENFKVLEL.

Belongs to the RNA polymerase subunit epsilon family. As to quaternary structure, RNAP is composed of a core of 2 alpha, a beta and a beta' subunit. The core is associated with a delta subunit, and at least one of epsilon or omega. When a sigma factor is associated with the core the holoenzyme is formed, which can initiate transcription.

It catalyses the reaction RNA(n) + a ribonucleoside 5'-triphosphate = RNA(n+1) + diphosphate. In terms of biological role, a non-essential component of RNA polymerase (RNAP). The protein is DNA-directed RNA polymerase subunit epsilon of Bacillus velezensis (strain DSM 23117 / BGSC 10A6 / LMG 26770 / FZB42) (Bacillus amyloliquefaciens subsp. plantarum).